We begin with the raw amino-acid sequence, 87 residues long: MATSTNGIIDPPIDDLLSKVESKYALVIFASKRARQINDYYADLHEGSLFDNVGPLVDSSVDDKPLSVAMHEINEDRLVLKPIAAAE.

The protein belongs to the RNA polymerase subunit omega family. In terms of assembly, the RNAP catalytic core consists of 2 alpha, 1 beta, 1 beta' and 1 omega subunit. When a sigma factor is associated with the core the holoenzyme is formed, which can initiate transcription.

It carries out the reaction RNA(n) + a ribonucleoside 5'-triphosphate = RNA(n+1) + diphosphate. Its function is as follows. Promotes RNA polymerase assembly. Latches the N- and C-terminal regions of the beta' subunit thereby facilitating its interaction with the beta and alpha subunits. This is DNA-directed RNA polymerase subunit omega from Leifsonia xyli subsp. xyli (strain CTCB07).